The primary structure comprises 670 residues: PML-RARA-regulated adapter molecule 1 (670 aa).

A disordered region spans residues 1 to 561 (MAHHLPAAME…PQQLPPMDPK (561 aa)). Basic and acidic residues predominate over residues 31–43 (DLPKKPPKPEFGK). A run of 4 repeats spans residues 70–81 (KPPPPEVTDLPK), 82–93 (KPPPPEVTDLPK), 94–105 (KPPPPEVTDLPK), and 106–117 (KPPPPEVTDLPK). The interval 70–165 (KPPPPEVTDL…SLPEPGAPAR (96 aa)) is 4 X 12 AA repeats of K-P-P-[PQ]-P-[EQ]-[VAF]-T-D-L-P-K. The segment covering 114 to 129 (DLPKKPSKLELSDLSK) has biased composition (basic and acidic residues). S340 is modified (phosphoserine). The segment covering 386 to 398 (SSASESSLPAAVA) has biased composition (low complexity). Residues 454-463 (PAKPPLPPGP) show a composition bias toward pro residues. Residues 504–514 (EIYELYDDVEP) are compositionally biased toward acidic residues. Basic and acidic residues predominate over residues 515–528 (RDDSSPSPKGRDEA). The 79-residue stretch at 571–649 (KAEREFRKKF…PRTALLPLET (79 aa)) folds into the SH3 domain.

As to quaternary structure, interacts with SKAP2, LCP2 and DBNL. May interact with LYN. Interacts with NEK6. Post-translationally, may be phosphorylated on tyrosines. In terms of tissue distribution, expressed in peripheral blood leukocytes and bone marrow. Expressed in monocytes, and to a lesser extent in granulocytes and lymphocytes. Not expressed in non hematopoietic tissues except in lung.

In terms of biological role, may be involved in myeloid differentiation. May be involved in integrin signaling in neutrophils. Binds to PtdIns(4)P. In Homo sapiens (Human), this protein is PML-RARA-regulated adapter molecule 1 (PRAM1).